We begin with the raw amino-acid sequence, 364 residues long: tRNA-specific 2-thiouridylase MnmA (364 aa).

Residues 12-19 (GISGGVDS) and Met-38 contribute to the ATP site. Residues 98-100 (NPD) are interaction with target base in tRNA. The Nucleophile role is filled by Cys-103. Cysteines 103 and 199 form a disulfide. Gly-127 provides a ligand contact to ATP. Residues 149-151 (KEQ) form an interaction with tRNA region. The active-site Cysteine persulfide intermediate is the Cys-199. An interaction with tRNA region spans residues 311–312 (RY).

The protein belongs to the MnmA/TRMU family.

Its subcellular location is the cytoplasm. It catalyses the reaction S-sulfanyl-L-cysteinyl-[protein] + uridine(34) in tRNA + AH2 + ATP = 2-thiouridine(34) in tRNA + L-cysteinyl-[protein] + A + AMP + diphosphate + H(+). In terms of biological role, catalyzes the 2-thiolation of uridine at the wobble position (U34) of tRNA, leading to the formation of s(2)U34. The sequence is that of tRNA-specific 2-thiouridylase MnmA from Hahella chejuensis (strain KCTC 2396).